The primary structure comprises 342 residues: tRNA N6-adenosine threonylcarbamoyltransferase (342 aa).

Fe cation contacts are provided by H112 and H116. Residues L134–G138, D167, G180, and N280 contribute to the substrate site. D308 provides a ligand contact to Fe cation.

Belongs to the KAE1 / TsaD family. The cofactor is Fe(2+).

Its subcellular location is the cytoplasm. The enzyme catalyses L-threonylcarbamoyladenylate + adenosine(37) in tRNA = N(6)-L-threonylcarbamoyladenosine(37) in tRNA + AMP + H(+). Its function is as follows. Required for the formation of a threonylcarbamoyl group on adenosine at position 37 (t(6)A37) in tRNAs that read codons beginning with adenine. Is involved in the transfer of the threonylcarbamoyl moiety of threonylcarbamoyl-AMP (TC-AMP) to the N6 group of A37, together with TsaE and TsaB. TsaD likely plays a direct catalytic role in this reaction. This Rickettsia canadensis (strain McKiel) protein is tRNA N6-adenosine threonylcarbamoyltransferase.